Here is a 2845-residue protein sequence, read N- to C-terminus: Multiple epidermal growth factor-like domains protein 8 (2845 aa).

Positions 1 to 27 (MALGKVLAMALVLALAVLGSLSPGARA) are cleaved as a signal peptide. Over 28 to 2647 (GDCKGQRQVL…FFRQDQAHID (2620 aa)) the chain is Extracellular. 6 cysteine pairs are disulfide-bonded: cysteine 30/cysteine 57, cysteine 142/cysteine 152, cysteine 146/cysteine 158, cysteine 174/cysteine 184, cysteine 178/cysteine 191, and cysteine 193/cysteine 202. Residues 30 to 140 (CKGQRQVLRE…LGFNASFRFS (111 aa)) enclose the CUB 1 domain. Asparagine 50 carries an N-linked (GlcNAc...) asparagine glycan. EGF-like domains follow at residues 138–168 (RFSLCPGGCQSHGQCQPPGVCACEPGWGGPD) and 170–203 (GLQECSAYCGSHGTCASPLGPCRCEPGFLGRACD). Asparagine 217 is a glycosylation site (N-linked (GlcNAc...) asparagine). Kelch repeat units lie at residues 241–287 (LLAV…AVAW), 290–338 (SLVL…AGHA), 346–399 (WLYV…FHAP), 402–453 (ALLV…FHTA), 459–511 (YMVV…APPS), and 525–575 (VLLV…SRDP). PSI domains are found at residues 561-613 (YCSM…GDCQ), 847-899 (SCTS…TLCP), and 900-947 (LCEE…EECP). The N-linked (GlcNAc...) asparagine glycan is linked to asparagine 1048. The EGF-like 3; calcium-binding domain maps to 1074–1115 (DVDECRLGLARCHPRATCLNTPLSYECHCQRGYQGDGISHCN). Intrachain disulfides connect cysteine 1078/cysteine 1091, cysteine 1085/cysteine 1100, cysteine 1102/cysteine 1114, cysteine 1163/cysteine 1171, cysteine 1165/cysteine 1179, cysteine 1182/cysteine 1191, cysteine 1194/cysteine 1208, cysteine 1211/cysteine 1224, cysteine 1213/cysteine 1231, cysteine 1233/cysteine 1242, cysteine 1245/cysteine 1259, cysteine 1263/cysteine 1302, cysteine 1336/cysteine 1367, cysteine 1407/cysteine 1421, cysteine 1415/cysteine 1433, and cysteine 1435/cysteine 1444. Laminin EGF-like domains lie at 1163 to 1210 (CGCS…GCRP) and 1211 to 1261 (CQCN…SCFR). Positions 1263-1405 (CGGRALLTNV…WGFNASVGSA (143 aa)) constitute a CUB 2 domain. Asparagine 1271 is a glycosylation site (N-linked (GlcNAc...) asparagine). Phosphothreonine is present on threonine 1353. The EGF-like 4 domain occupies 1403–1445 (GSARCGSGGPGSCPVPQECVPQDGAAGAGLCRCPQGWAGPHCR). Kelch repeat units lie at residues 1522 to 1570 (TLWM…SFHA), 1580 to 1626 (AMYL…HTLT), 1632 to 1679 (SLLL…SAVY), 1685 to 1735 (SLYV…VRGS), 1796 to 1843 (TMVV…ESVA), and 1852 to 1898 (RLYI…CHGA). The disordered stretch occupies residues 1726-1745 (RDRMRNVRGSSRGLGQVPGE). PSI domains follow at residues 1876–1916 (PCRL…SPCS), 1924–1979 (ECRR…NDCR), 2060–2118 (PCHL…ESCS), and 2120–2177 (GCAQ…LSCP). N-linked (GlcNAc...) asparagine glycosylation occurs at asparagine 2066. The 39-residue stretch at 2178–2216 (PEDECANGHHDCNETQNCHDQPHGYECSCKTGYTMDNMT) folds into the EGF-like 5 domain. 2 cysteine pairs are disulfide-bonded: cysteine 2182–cysteine 2195 and cysteine 2189–cysteine 2204. Asparagine 2229 carries an N-linked (GlcNAc...) asparagine glycan. Cystine bridges form between cysteine 2253-cysteine 2261, cysteine 2255-cysteine 2270, cysteine 2273-cysteine 2282, cysteine 2285-cysteine 2299, cysteine 2380-cysteine 2389, cysteine 2382-cysteine 2397, cysteine 2399-cysteine 2424, and cysteine 2427-cysteine 2441. 2 Laminin EGF-like domains span residues 2253–2301 (CRCN…TCRP) and 2380–2443 (CQCN…QCYR). A disordered region spans residues 2523-2564 (TVHIQPPPAPPPPPPPADGGPRGAGDPGGAGASSGPGAPAEP). A compositionally biased stretch (pro residues) spans 2527 to 2540 (QPPPAPPPPPPPAD). Residues 2542–2556 (GPRGAGDPGGAGASS) show a composition bias toward gly residues. The chain crosses the membrane as a helical span at residues 2648–2668 (LFVFFSVFFSCFFLFLSLCVL). Over 2669–2845 (LWKAKQALDQ…SQDNLTSMSL (177 aa)) the chain is Cytoplasmic. Over residues 2817-2831 (GGGAGGSGHGTGAGR) the composition is skewed to gly residues. Residues 2817–2845 (GGGAGGSGHGTGAGRKGLLSQDNLTSMSL) form a disordered region. Over residues 2836 to 2845 (SQDNLTSMSL) the composition is skewed to polar residues.

It localises to the membrane. Functionally, acts as a negative regulator of hedgehog signaling. This Homo sapiens (Human) protein is Multiple epidermal growth factor-like domains protein 8 (MEGF8).